The sequence spans 414 residues: Esterase FrsA (414 aa).

It belongs to the FrsA family.

The catalysed reaction is a carboxylic ester + H2O = an alcohol + a carboxylate + H(+). In terms of biological role, catalyzes the hydrolysis of esters. The sequence is that of Esterase FrsA from Escherichia coli O127:H6 (strain E2348/69 / EPEC).